Reading from the N-terminus, the 685-residue chain is Envelope glycoprotein (685 aa).

The first 41 residues, 1-41, serve as a signal peptide directing secretion; that stretch reads MVLLPGSMLLTSNLHHLRHQMSPGSWKRLIILLSCVFGGGG. The Extracellular portion of the chain corresponds to 42 to 632; sequence TSLQNKNPHQ…NNSPWFTTLL (591 aa). Cystine bridges form between Cys148/Cys169 and Cys161/Cys174. Positions 276 to 309 are disordered; that stretch reads PPRTSLALPPPLPPREAPPPSLPDSNSTALATSA. Positions 283–297 are enriched in pro residues; sequence LPPPLPPREAPPPSL. Residues 299–309 show a composition bias toward polar residues; it reads DSNSTALATSA. Residues Asn301 and Asn344 are each glycosylated (N-linked (GlcNAc...) asparagine; by host). Disulfide bonds link Cys354-Cys357, Cys354-Cys584, and Cys576-Cys583. The short motif at 354 to 357 is the CXXC element; sequence CWLC. Residues Asn415, Asn421, Asn433, and Asn453 are each glycosylated (N-linked (GlcNAc...) asparagine; by host). The segment at 492–512 is fusion peptide; that stretch reads VSLTLAVLLGLGITAGIGTGS. Coiled-coil stretches lie at residues 520–570 and 580–616; these read IDLQ…LLFL and KEEC…KSQN. Positions 559–575 are immunosuppression; sequence LQNRRGLDLLFLKEGGL. Residues 576 to 584 carry the CX6CC motif; sequence CAALKEECC. The chain crosses the membrane as a helical span at residues 633–653; sequence STIAGPLLLLLLLLILGPCII. A lipid anchor (S-palmitoyl cysteine; by host) is attached at Cys651. The Cytoplasmic segment spans residues 654 to 685; it reads NKLVQFINDRISAVKILVLRQKYQALENEGNL. Positions 676–679 match the YXXL motif; contains endocytosis signal motif; that stretch reads YQAL.

As to quaternary structure, the mature envelope protein (Env) consists of a trimer of SU-TM heterodimers attached by a labile interchain disulfide bond. Post-translationally, specific enzymatic cleavages in vivo yield mature proteins. Envelope glycoproteins are synthesized as an inactive precursor that is N-glycosylated and processed likely by host cell furin or by a furin-like protease in the Golgi to yield the mature SU and TM proteins. The cleavage site between SU and TM requires the minimal sequence [KR]-X-[KR]-R. The R-peptide is released from the C-terminus of the cytoplasmic tail of the TM protein upon particle formation as a result of proteolytic cleavage by the viral protease. Cleavage of this peptide is required for TM to become fusogenic. The CXXC motif is highly conserved across a broad range of retroviral envelope proteins. It is thought to participate in the formation of a labile disulfide bond possibly with the CX6CC motif present in the transmembrane protein. Isomerization of the intersubunit disulfide bond to an SU intrachain disulfide bond is thought to occur upon receptor recognition in order to allow membrane fusion. In terms of processing, the transmembrane protein is palmitoylated. Post-translationally, the R-peptide is palmitoylated.

Its subcellular location is the virion membrane. It localises to the host cell membrane. In terms of biological role, the surface protein (SU) attaches the virus to the host cell by binding to its receptor. This interaction triggers the refolding of the transmembrane protein (TM) and is thought to activate its fusogenic potential by unmasking its fusion peptide. Fusion occurs at the host cell plasma membrane. The transmembrane protein (TM) acts as a class I viral fusion protein. Under the current model, the protein has at least 3 conformational states: pre-fusion native state, pre-hairpin intermediate state, and post-fusion hairpin state. During viral and target cell membrane fusion, the coiled coil regions (heptad repeats) assume a trimer-of-hairpins structure, positioning the fusion peptide in close proximity to the C-terminal region of the ectodomain. The formation of this structure appears to drive apposition and subsequent fusion of viral and target cell membranes. Membranes fusion leads to delivery of the nucleocapsid into the cytoplasm. The protein is Envelope glycoprotein (env) of Gibbon ape leukemia virus (GALV).